Reading from the N-terminus, the 136-residue chain is Protein NrdI (136 aa).

Belongs to the NrdI family.

Its function is as follows. Probably involved in ribonucleotide reductase function. The chain is Protein NrdI from Klebsiella pneumoniae subsp. pneumoniae (strain ATCC 700721 / MGH 78578).